We begin with the raw amino-acid sequence, 271 residues long: Solute carrier family 66 member 2 (271 aa).

3 helical membrane-spanning segments follow: residues 7–27 (GWLL…AMVF), 49–69 (FSTH…LFWF), and 72–92 (HFES…LLML). Residues 14–80 (HQLVSWVAAG…RHFESPLLWQ (67 aa)) enclose the PQ-loop 1 domain. A Phosphoserine modification is found at S110. Helical transmembrane passes span 145–165 (DYVQ…YLSI), 168–188 (ALFV…LGVP), and 232–252 (VCGL…YAFA). In terms of domain architecture, PQ-loop 2 spans 178 to 233 (AVLTEAMLGVPQLYRNYCHRSTEGMSLKMVLMWTSGDTFKTAYFLLNGAPLQFSVC).

The protein localises to the membrane. The polypeptide is Solute carrier family 66 member 2 (Slc66a2) (Mus musculus (Mouse)).